The sequence spans 353 residues: Small ribosomal subunit protein uS2 (353 aa).

The disordered stretch occupies residues Asp256–Ala353. Low complexity-rich tracts occupy residues Ala263 to Pro311 and Glu321 to Glu339. Residues Ala340–Ala353 show a composition bias toward acidic residues.

It belongs to the universal ribosomal protein uS2 family.

In Beutenbergia cavernae (strain ATCC BAA-8 / DSM 12333 / CCUG 43141 / JCM 11478 / NBRC 16432 / NCIMB 13614 / HKI 0122), this protein is Small ribosomal subunit protein uS2.